A 184-amino-acid polypeptide reads, in one-letter code: Large ribosomal subunit protein uL5c (184 aa).

This sequence belongs to the universal ribosomal protein uL5 family. In terms of assembly, part of the 50S ribosomal subunit; contacts the 5S rRNA.

The protein resides in the plastid. The protein localises to the chloroplast. Functionally, binds 5S rRNA, forms part of the central protuberance of the 50S subunit. This Mesostigma viride (Green alga) protein is Large ribosomal subunit protein uL5c (rpl5).